We begin with the raw amino-acid sequence, 330 residues long: 6-methylsalicylic acid decarboxylase acuB (330 aa).

Zn(2+)-binding residues include His-6, His-8, His-156, and Asp-276.

Belongs to the metallo-dependent hydrolases superfamily. ACMSD family. In terms of assembly, monomer.

It localises to the cytoplasm. The protein resides in the cytosol. The catalysed reaction is 6-methylsalicylate + H(+) = 3-methylphenol + CO2. Its pathway is secondary metabolite biosynthesis. Functionally, 6-methylsalicylic acid decarboxylase; part of the gene cluster that mediates the biosynthesis of aculins. The pathway begins with the synthesis of 6-methylsalicylic acid by the polyketide synthase (PKS) acuA via condensation of acetate and malonate units. The 6-methylsalicylic acid decarboxylase acuB then catalyzes the decarboxylation of 6-methylsalicylic acid to yield m-cresol (also known as 3-methylphenol). These first reactions occur in the cytosol. The intermediate m-cresol is then transported into the endoplasmic reticulum where the cytochrome P450 monooxygenase acuC converts it to m-hydroxybenzyl alcohol, which is further converted to gentisyl alcohol by the cytochrome P450 monooxygenase acuD. Gentisyl alcohol is further oxidized by the oxidoreductase acuE that probably catalyzes hydroxylation of the aromatic ring. The aromatic system might then be opened by oxidation through a Baeyer-Villiger type of oxidation, which could be catalyzed by acuF, with the carboxylic acid at C-1 subsequently reduced to an aldehyde by acuG. Subsequently, a hemiacetal is formed, before the dehydrogenase acuH would reduce the double bond between C-4 and C-6. Finally, keto-enol tautomerism results in formation of aculinic acid, which exists as two diastereomers (both R/S configurations at C-1) by non-enzymatic hemiacetal formation. The carboxypeptidase acuI could be involved in the linking of aculinic acid to an aculene A moiety produced by the aculene biosynthesis cluster and which leads to the production of aculin A. AcuI may also be involved in the attachment of proline to aculinic acid to form epi-aculins A and B. The protein is 6-methylsalicylic acid decarboxylase acuB of Aspergillus aculeatus (strain ATCC 16872 / CBS 172.66 / WB 5094).